The sequence spans 141 residues: MAAAGSIMAFDFGTRSIGVAIGQRVTCTARPLTAFKARDGVPDWQQIEKLLKEWRPETVVVGLPLNMDGSEQPLTARVRKFANRMHGRFGVQVVLHDERLSTVEARAGLFERGGYRALEKGKVDAGSAVIILESWLEQFPE.

This sequence belongs to the YqgF nuclease family.

Its subcellular location is the cytoplasm. Could be a nuclease involved in processing of the 5'-end of pre-16S rRNA. This chain is Putative pre-16S rRNA nuclease, found in Sodalis glossinidius (strain morsitans).